We begin with the raw amino-acid sequence, 634 residues long: Acetylcholinesterase (634 aa).

The first 23 residues, 1–23, serve as a signal peptide directing secretion; that stretch reads MKTSDILLLPTVLLTFLFHNCFA. Cysteine 91 and cysteine 118 form a disulfide bridge. N-linked (GlcNAc...) asparagine glycans are attached at residues asparagine 133 and asparagine 184. The active-site Acyl-ester intermediate is the serine 225. A disulfide bridge connects residues cysteine 279 and cysteine 290. Asparagine 283 carries N-linked (GlcNAc...) asparagine glycosylation. The active-site Charge relay system is the glutamate 352. Asparagine 368 is a glycosylation site (N-linked (GlcNAc...) asparagine). The cysteines at positions 427 and 580 are disulfide-linked. Histidine 495 (charge relay system) is an active-site residue. 2 N-linked (GlcNAc...) asparagine glycosylation sites follow: asparagine 512 and asparagine 592.

Belongs to the type-B carboxylesterase/lipase family. Dimers and collagen-tailed forms, in which catalytic tetramers are associated with anchoring proteins that attach them to the basal lamina or to cell membranes. In the collagen-tailed forms, subunits are associated with a specific collagen, COLQ, which triggers the formation of isoform T tetramers from dimers.

Its subcellular location is the synapse. The protein resides in the secreted. The protein localises to the cell membrane. The catalysed reaction is acetylcholine + H2O = choline + acetate + H(+). Its function is as follows. Terminates signal transduction at the neuromuscular junction by rapid hydrolysis of the acetylcholine released into the synaptic cleft. The chain is Acetylcholinesterase (ache) from Danio rerio (Zebrafish).